We begin with the raw amino-acid sequence, 364 residues long: MYFLVADHREHHVIPFLKTDFHDMQHNPMFTQKQALLEIKQLFTGDYLICKSPTTILACIERKTYKDFAASLKDGRYKNRQKMLSLREQTNCQLYFFVEGPAFPNPQKKINHVAYASIITAMTHLMVRDHIFVIQTKNEAHSSQKLVQLFYAFSKEMVCVVPTSLTPTDEELCIKLWSSLSGISGVIGKILANTCSVAHLVSGKLSSQNIDQLKTPSNRPFPKKVKRMLISISKGNKELEIKLLSGVPNIGKKLAAEILKDHALLFFLNQPVECLANIQIVQKTRTIKLGMKRAEAIHYFLNWCGSAHVTDDSQNITEASRPATQPAATQPLHEVSDDATSNASDTSSPIGHQTLSKEMLLNTA.

In terms of domain architecture, ERCC4 spans 3-102 (FLVADHREHH…QLYFFVEGPA (100 aa)). Polar residues predominate over residues 319–328 (ASRPATQPAA). The interval 319–352 (ASRPATQPAATQPLHEVSDDATSNASDTSSPIGH) is disordered. The segment covering 338-348 (DATSNASDTSS) has biased composition (low complexity).

Belongs to the asfivirus EP364R family.

Functionally, plays a role in the inhibition of type I interferon signaling pathway. Mechanistically, specifically interacts with 2',3'-cGAMP and cleaves it via its phosphodiesterase activity. In turn, prevents 2',3'-cGAMP interaction with host ER-resident STING1 leading to inhibition of downstream signaling pathway and type I interferon production. The polypeptide is ERCC4 domain-containing protein EP364R (African swine fever virus (strain Badajoz 1971 Vero-adapted) (Ba71V)).